A 130-amino-acid chain; its full sequence is MYSAVTRGIEVTVEPFYLEVQSEPEENRYVWGYRVTIVNNSSETVQLCSRYWQITDANGHVQEVRGSGVVGKQPVLDPGDSYQYSSGCPLTTSSGVMVGRYQMKGEDGAQFEIEIPAFSLDVPEQRRTLN.

Positions 3–127 (SAVTRGIEVT…FSLDVPEQRR (125 aa)) constitute an ApaG domain.

This chain is Protein ApaG, found in Brucella abortus (strain S19).